The primary structure comprises 294 residues: 33 kDa chaperonin (294 aa).

Intrachain disulfides connect Cys-239/Cys-241 and Cys-272/Cys-275.

Belongs to the HSP33 family. Under oxidizing conditions two disulfide bonds are formed involving the reactive cysteines. Under reducing conditions zinc is bound to the reactive cysteines and the protein is inactive.

The protein resides in the cytoplasm. Its function is as follows. Redox regulated molecular chaperone. Protects both thermally unfolding and oxidatively damaged proteins from irreversible aggregation. Plays an important role in the bacterial defense system toward oxidative stress. The protein is 33 kDa chaperonin of Listeria welshimeri serovar 6b (strain ATCC 35897 / DSM 20650 / CCUG 15529 / CIP 8149 / NCTC 11857 / SLCC 5334 / V8).